A 327-amino-acid polypeptide reads, in one-letter code: Movement protein (327 aa).

A coiled-coil region spans residues 297–327 (SASSSNTENELARVSQNIDLLKNKLKEICGE).

It belongs to the caulimoviridae movement protein family. In terms of assembly, homotrimer, through the coiled-coil domain. Interacts with VAP. May interact (via N-terminus) with host prenylated Rab acceptor protein 1D (PRA1D).

The protein localises to the host cell junction. Its subcellular location is the host plasmodesma. Its function is as follows. Transports viral genome to neighboring plant cells directly through plasmosdesmata, without any budding. The movement protein allows efficient cell to cell propagation, by bypassing the host cell wall barrier. Acts by forming tubules structures that increase the size exclusion limit (SEL) of plasmodesmata, thereby allowing viral ribonucleocapsids to spread directly to neighboring cells. This is Movement protein from Arabidopsis thaliana (Mouse-ear cress).